The primary structure comprises 487 residues: MSKLWGGRFSKQTDQLVDEFNASIEFDNRLIFYDLLGSQAHVKMLFQQGIIDTTDYKQITEGLDIIWKEAEQDKLEFNLSDEDIHMSIEKRLIELKGEVGKKLHTARSRNDQVAVDMNMFLCDKAIKLVNELLQNMSVIKELSEQHTKTYMPGYTHLQRAQPTTLGHHMLNYFWKFQRDASRLIDFRNRADLSPLGSGAFAGTGFNISRRSTRKDLGFTQQFENSMDAVSSRDLSLEFIFCLSSIMINLSRLAEELILWSTKEFDFIELDDAFATGSSIMPQKKNPDVPELIRGKTGRVVGHLTALATTYKGLPMAYNKDFQEDKEGLFDSLDTVESSLKLTSKILSTMTIKTKNMEKALYQDFSNATDIADYLATQGIPFRDAHAVVGQLVKHCQEHNKLFYQLTEQELDISFKQIADSLEENSQQILTQMDTTKILNIMDPIKCVHNRNSRGAPAPEALQFQLGQAQKYFHSLTEQVKTYQSFLP.

Belongs to the lyase 1 family. Argininosuccinate lyase subfamily.

It localises to the cytoplasm. It carries out the reaction 2-(N(omega)-L-arginino)succinate = fumarate + L-arginine. It functions in the pathway amino-acid biosynthesis; L-arginine biosynthesis; L-arginine from L-ornithine and carbamoyl phosphate: step 3/3. This chain is Argininosuccinate lyase, found in Natranaerobius thermophilus (strain ATCC BAA-1301 / DSM 18059 / JW/NM-WN-LF).